Here is a 97-residue protein sequence, read N- to C-terminus: Small ribosomal subunit protein bS21 (97 aa).

Positions 37-97 (EKPSVRKARE…APASSPTTTA (61 aa)) are disordered. Residues 76 to 97 (RAVAPRRPAAAPAPASSPTTTA) show a composition bias toward low complexity.

The protein belongs to the bacterial ribosomal protein bS21 family.

The protein is Small ribosomal subunit protein bS21 of Methylobacterium sp. (strain 4-46).